An 89-amino-acid chain; its full sequence is Small ribosomal subunit protein uS15 (89 aa).

Belongs to the universal ribosomal protein uS15 family. As to quaternary structure, part of the 30S ribosomal subunit. Forms a bridge to the 50S subunit in the 70S ribosome, contacting the 23S rRNA.

In terms of biological role, one of the primary rRNA binding proteins, it binds directly to 16S rRNA where it helps nucleate assembly of the platform of the 30S subunit by binding and bridging several RNA helices of the 16S rRNA. Forms an intersubunit bridge (bridge B4) with the 23S rRNA of the 50S subunit in the ribosome. The polypeptide is Small ribosomal subunit protein uS15 (Solibacter usitatus (strain Ellin6076)).